Here is a 66-residue protein sequence, read N- to C-terminus: MSDDIVNVTCPTCGKAVEWSPTSPFRPFCSKRCQLIDLGEWAEEEKRIPSDVQITDSDEWSDETRY.

The Zn(2+) site is built by Cys10, Cys13, Cys29, and Cys33. The disordered stretch occupies residues 46–66 (KRIPSDVQITDSDEWSDETRY). The span at 56-66 (DSDEWSDETRY) shows a compositional bias: acidic residues.

This sequence belongs to the DNA gyrase inhibitor YacG family. Interacts with GyrB. Zn(2+) is required as a cofactor.

Its function is as follows. Inhibits all the catalytic activities of DNA gyrase by preventing its interaction with DNA. Acts by binding directly to the C-terminal domain of GyrB, which probably disrupts DNA binding by the gyrase. This Sodalis glossinidius (strain morsitans) protein is DNA gyrase inhibitor YacG.